Here is an 804-residue protein sequence, read N- to C-terminus: Chondroitin sulfate synthase mig-22 (804 aa).

At 1–6 (MVGGGR) the chain is on the cytoplasmic side. The chain crosses the membrane as a helical; Signal-anchor for type II membrane protein span at residues 7 to 27 (TGIHLLLGFLIGAALALFFFS). Over 28 to 804 (STPSIDLTSS…QLAKLLFHEK (777 aa)) the chain is Lumenal. N-linked (GlcNAc...) asparagine glycans are attached at residues asparagine 123, asparagine 172, and asparagine 268.

This sequence belongs to the chondroitin N-acetylgalactosaminyltransferase family. Interacts with sqv-5. It depends on a divalent metal cation as a cofactor. As to expression, expressed in seam cells, the vulval epithelium and in oocytes (at protein level).

Its subcellular location is the golgi apparatus. It is found in the golgi stack membrane. The catalysed reaction is 3-O-(beta-D-GlcA-(1-&gt;3)-beta-D-GalNAc-(1-&gt;4)-beta-D-GlcA-(1-&gt;3)-beta-D-Gal-(1-&gt;3)-beta-D-Gal-(1-&gt;4)-beta-D-Xyl)-L-seryl-[protein] + UDP-N-acetyl-alpha-D-galactosamine = 3-O-(beta-D-GalNAc-(1-&gt;4)-beta-D-GlcA-(1-&gt;3)-beta-D-GalNAc-(1-&gt;4)-beta-D-GlcA-(1-&gt;3)-beta-D-Gal-(1-&gt;3)-beta-D-Gal-(1-&gt;4)-beta-D-Xyl)-L-seryl-[protein] + UDP + H(+). It carries out the reaction 3-O-{beta-D-GlcA-(1-&gt;3)-[beta-D-GalNAc-(1-&gt;4)-beta-D-GlcA-(1-&gt;3)](n)-beta-D-GalNAc-(1-&gt;4)-beta-D-GlcA-(1-&gt;3)-beta-D-Gal-(1-&gt;3)-beta-D-Gal-(1-&gt;4)-beta-D-Xyl}-L-seryl-[protein] + UDP-N-acetyl-alpha-D-galactosamine = 3-O-{[beta-D-GalNAc-(1-&gt;4)-beta-D-GlcA-(1-&gt;3)](n+1)-beta-D-GalNAc-(1-&gt;4)-beta-D-GlcA-(1-&gt;3)-beta-D-Gal-(1-&gt;3)-beta-D-Gal-(1-&gt;4)-beta-D-Xyl}-L-seryl-[protein] + UDP + H(+). The enzyme catalyses 3-O-(beta-D-GalNAc-(1-&gt;4)-beta-D-GlcA-(1-&gt;3)-beta-D-Gal-(1-&gt;3)-beta-D-Gal-(1-&gt;4)-beta-D-Xyl)-L-seryl-[protein] + UDP-alpha-D-glucuronate = 3-O-(beta-D-GlcA-(1-&gt;3)-beta-D-GalNAc-(1-&gt;4)-beta-D-GlcA-(1-&gt;3)-beta-D-Gal-(1-&gt;3)-beta-D-Gal-(1-&gt;4)-beta-D-Xyl)-L-seryl-[protein] + UDP + H(+). It catalyses the reaction 3-O-{[beta-D-GalNAc-(1-&gt;4)-beta-D-GlcA-(1-&gt;3)](n)-beta-D-GalNAc-(1-&gt;4)-beta-D-GlcA-(1-&gt;3)-beta-D-Gal-(1-&gt;3)-beta-D-Gal-(1-&gt;4)-beta-D-Xyl}-L-seryl-[protein] + UDP-alpha-D-glucuronate = 3-O-{beta-D-GlcA-(1-&gt;3)-[beta-D-GalNAc-(1-&gt;4)-beta-D-GlcA-(1-&gt;3)](n)-beta-D-GalNAc-(1-&gt;4)-beta-D-GlcA-(1-&gt;3)-beta-D-Gal-(1-&gt;3)-beta-D-Gal-(1-&gt;4)-beta-D-Xyl}-L-seryl-[protein] + UDP + H(+). Has both beta-1,3-glucuronic acid and beta-1,4-N-acetylgalactosamine transferase activity. Transfers glucuronic acid (GlcUA) from UDP-GlcUA and N-acetylgalactosamine (GalNAc) from UDP-GalNAc to the non-reducing end of the elongating chondroitin polymer. Required together with sqv-5 for the biosynthesis of chondroitin. Chondroitin is involved in organogenesis of the vulva, maturation of the gonad, and neural development. May have a specific role in unc-6/netrin-mediated dorsal guidance of gonadal distal tip cells. Glycosyltransferase activity is weak. The protein is Chondroitin sulfate synthase mig-22 (mig-22) of Caenorhabditis elegans.